Reading from the N-terminus, the 728-residue chain is MRICFLLLAFLVAETFANELTRCCAGGTRHFKNSNTCSSIKSEGTSMTCQRAASICCLRSLLDNACDSGTDIAKEEESCPSNINILGGGLKKECCDCCLLAKDLLNRNEPCVAPVGFSAGCLRSFNKCCNGDIEITHASEIITGRPLNDPHVLHLGDRCASSHCEHLCHDRGGEKVECSCRSGFDLAPDGMACVDRNECLTRQSPCTQSEDCVNTIGGYICQRRISRLVPHRHRANRIGNAPRRMRDDPYSRAGEYREASQANTEFGCPMGWLFQHGHCVDVDECNLGSHDCGPLYQCRNTQGSYRCDAKKCGDGELQNPMTGECTSITCPNGYYPKNGMCNDIDECVTGHNCGAGEECVNTPGSFRCQQKGNLCAHGYEVNGATGFCEDVNECQQGVCGSMECINLPGTYKCKCGPGYEFNDAKKRCEDVDECIKFAGHVCDLSAECINTIGSFECKCKPGFQLASDGRRCEDVNECTTGIAACEQKCVNIPGSYQCICDRGFALGPDGTKCEDIDECSIWAGSGNDLCMGGCINTKGSYLCQCPPGYKIQPDGRTCVDVDECAMGECAGSDKVCVNTLGSFKCHSIDCPTNYIHDSLNKNQIADGYSCIKVCSTEDTECLGNHTREVLYQFRAVPSLKTIISPIEVSRIVTHMGVPFSVDYNLDYVGQRHFRIVQERNIGIVQLVKPISGPTVETIKVNIHTKSRTGVILAFNEAIIEISVSKYPF.

The signal sequence occupies residues 1–17 (MRICFLLLAFLVAETFA). 30 cysteine pairs are disulfide-bonded: C23–C49, C24–C56, C37–C57, C66–C94, C79–C95, C97–C121, C98–C128, C111–C129, C159–C168, C164–C178, C180–C279, C285–C298, C292–C307, C347–C359, C353–C368, C375–C388, C394–C404, C399–C413, C415–C428, C434–C448, C442–C457, C459–C472, C478–C489, C485–C498, C500–C513, C519–C534, C530–C543, C545–C558, C564–C576, and C569–C585. Anaphylatoxin-like domains follow at residues 23–64 (CCAG…LLDN), 65–96 (ACDSGTDIAKEEESCPSNINILGGGLKKECCD), and 97–129 (CCLLAKDLLNRNEPCVAPVGFSAGCLRSFNKCC). In terms of domain architecture, EGF-like 1 spans 155–194 (LGDRCASSHCEHLCHDRGGEKVECSCRSGFDLAPDGMACV). In terms of domain architecture, EGF-like 2; calcium-binding spans 195–280 (DRNECLTRQS…GWLFQHGHCV (86 aa)). One can recognise an EGF-like 3; calcium-binding domain in the interval 281-344 (DVDECNLGSH…YPKNGMCNDI (64 aa)). In terms of domain architecture, EGF-like 4; calcium-binding spans 343–389 (DIDECVTGHNCGAGEECVNTPGSFRCQQKGNLCAHGYEVNGATGFCE). The EGF-like 5; calcium-binding domain maps to 390–429 (DVNECQQGVCGSMECINLPGTYKCKCGPGYEFNDAKKRCE). In terms of domain architecture, EGF-like 6; calcium-binding spans 430 to 473 (DVDECIKFAGHVCDLSAECINTIGSFECKCKPGFQLASDGRRCE). The 41-residue stretch at 474–514 (DVNECTTGIAACEQKCVNIPGSYQCICDRGFALGPDGTKCE) folds into the EGF-like 7; calcium-binding domain. Residues 515–559 (DIDECSIWAGSGNDLCMGGCINTKGSYLCQCPPGYKIQPDGRTCV) enclose the EGF-like 8; calcium-binding domain. The EGF-like 9; calcium-binding domain occupies 560–610 (DVDECAMGECAGSDKVCVNTLGSFKCHSIDCPTNYIHDSLNKNQIADGYSC). Residue N624 is glycosylated (N-linked (GlcNAc...) asparagine).

The protein belongs to the fibulin family. In terms of assembly, homomultimerizes and interacts with various extracellular matrix components. Expressed in head muscle cells, anterior and posterior intestinal cells. Isoform a: Expressed in male and hermaphrodite gonad, anterior and posterior intestine and pharyngeal basement membranes, body-wall muscle, GLR cells, uterine attachment and mechanosensory neurons. Isoform c: Expressed on ALM/PLM mechanosensory neuron attachments, in flexible tracks connecting the pharyngeal, body-wall-muscle basement membranes and in uterine attachments.

The protein resides in the secreted. It localises to the extracellular space. It is found in the extracellular matrix. Its subcellular location is the basement membrane. Functionally, incorporated into fibronectin-containing matrix fibers. Plays a role in cell adhesion and migration along protein fibers within the extracellular matrix (ECM). Important for certain developmental processes and contributes to the supramolecular organization of ECM architecture, in particular to those of basement membranes. Its function is as follows. Involved in regulating the shape and adhesion of cells in the developing pharynx, intestine, body-wall muscle and gonadal tissue. During gonadogenesis, regulates the width of gonads and the migration of distal tip cells (DTC). Together with type IV collagen let-2 and downstream of metalloprotease mig-17, recruits nidogen nid-1 to the gonad basement membrane thereby inducing basement membrane remodeling required for the directional migration of DTCs. Acts antagonistically with metalloprotease gon-1 to maintain optimal levels of type IV collagen emb-9 in the gonad basement membrane during gonadogenesis. Required for larval development. Involved in the assembly of the flexible hemicentin-containing tracks found joining the pharynx and body-wall-muscle basement membranes. This Caenorhabditis elegans protein is Fibulin-1 (fbl-1).